Reading from the N-terminus, the 290-residue chain is Shikimate kinase (290 aa).

81–91 (PIASGLKSSSA) provides a ligand contact to ATP.

It belongs to the GHMP kinase family. Archaeal shikimate kinase subfamily.

Its subcellular location is the cytoplasm. The catalysed reaction is shikimate + ATP = 3-phosphoshikimate + ADP + H(+). The protein operates within metabolic intermediate biosynthesis; chorismate biosynthesis; chorismate from D-erythrose 4-phosphate and phosphoenolpyruvate: step 5/7. The chain is Shikimate kinase from Methanocella arvoryzae (strain DSM 22066 / NBRC 105507 / MRE50).